Reading from the N-terminus, the 471-residue chain is ATP synthase subunit beta (471 aa).

153-160 contacts ATP; sequence GGAGVGKT.

Belongs to the ATPase alpha/beta chains family. As to quaternary structure, F-type ATPases have 2 components, CF(1) - the catalytic core - and CF(0) - the membrane proton channel. CF(1) has five subunits: alpha(3), beta(3), gamma(1), delta(1), epsilon(1). CF(0) has four main subunits: a(1), b(1), b'(1) and c(9-12).

It is found in the cell membrane. It carries out the reaction ATP + H2O + 4 H(+)(in) = ADP + phosphate + 5 H(+)(out). Functionally, produces ATP from ADP in the presence of a proton gradient across the membrane. The catalytic sites are hosted primarily by the beta subunits. In Roseiflexus castenholzii (strain DSM 13941 / HLO8), this protein is ATP synthase subunit beta.